A 203-amino-acid chain; its full sequence is Large ribosomal subunit protein bL25 (203 aa).

The protein belongs to the bacterial ribosomal protein bL25 family. CTC subfamily. In terms of assembly, part of the 50S ribosomal subunit; part of the 5S rRNA/L5/L18/L25 subcomplex. Contacts the 5S rRNA. Binds to the 5S rRNA independently of L5 and L18.

Functionally, this is one of the proteins that binds to the 5S RNA in the ribosome where it forms part of the central protuberance. The polypeptide is Large ribosomal subunit protein bL25 (Wolbachia pipientis wMel).